Consider the following 307-residue polypeptide: Malate dehydrogenase (307 aa).

Residues 8 to 13 (GAGNVG) and D32 each bind NAD(+). The substrate site is built by R81 and R87. Residues N94 and 117–119 (VSN) contribute to the NAD(+) site. Substrate contacts are provided by N119 and R150. H174 acts as the Proton acceptor in catalysis.

The protein belongs to the LDH/MDH superfamily. MDH type 3 family.

It carries out the reaction (S)-malate + NAD(+) = oxaloacetate + NADH + H(+). Catalyzes the reversible oxidation of malate to oxaloacetate. In Dehalococcoides mccartyi (strain ATCC BAA-2100 / JCM 16839 / KCTC 5957 / BAV1), this protein is Malate dehydrogenase.